A 208-amino-acid polypeptide reads, in one-letter code: Sodium/potassium-transporting ATPase subunit beta-1-interacting protein 4 (208 aa).

Helical transmembrane passes span Ala-35–Ile-55, Val-62–Phe-82, and Cys-151–Phe-171.

It belongs to the NKAIN family. Interacts with ATP1B1.

Its subcellular location is the cell membrane. The protein is Sodium/potassium-transporting ATPase subunit beta-1-interacting protein 4 (NKAIN4) of Homo sapiens (Human).